We begin with the raw amino-acid sequence, 199 residues long: Pre T-cell antigen receptor alpha (199 aa).

The N-terminal stretch at 1 to 16 (MARTWLLLLLGVRCQA) is a signal peptide. Topologically, residues 17–146 (LPSGIAGTPF…PEPLGGTQRQ (130 aa)) are extracellular. Residues cysteine 47 and cysteine 107 are joined by a disulfide bond. Asparagine 67 and asparagine 117 each carry an N-linked (GlcNAc...) asparagine glycan. A helical membrane pass occupies residues 147–167 (VLWLSLLRLLLFKLLLLDVLL). The Cytoplasmic segment spans residues 168–199 (TCSHLRLHVLAGQHLQPPPSRKSLPPTHRIWT).

As to quaternary structure, heterodimer with TCRB; disulfide linked. This heterodimer assembles with CD3 proteins into a signaling-competent pre-T-cell receptor complex. Interacts with RHBDD1. Isoform 1 is expressed at higher levels than isoform 2 in the thymus while only isoform 2 is expressed in polyclonal beta-only cells. Isoform 1 shows a predominant expression in immature thymocytes.

The protein localises to the membrane. The protein resides in the cell membrane. Component of the pre-T-cell receptor complex (composed of PTCRA, TCRB and the CD3 complex) that plays a crucial role in early T-cell development, particularly alpha-beta T cell differentiation. Isoform 1 acts to retain most TCRB intracellularly, while isoform 2 permits higher levels of cell surface TCRB expression and facilitates signaling from the CD3-TCRB complex. The sequence is that of Pre T-cell antigen receptor alpha from Mus musculus (Mouse).